Here is a 138-residue protein sequence, read N- to C-terminus: Nucleoside diphosphate kinase (138 aa).

ATP is bound by residues lysine 10, phenylalanine 58, arginine 86, threonine 92, arginine 103, and asparagine 113. The Pros-phosphohistidine intermediate role is filled by histidine 116.

This sequence belongs to the NDK family. As to quaternary structure, homotetramer. The cofactor is Mg(2+).

It is found in the cytoplasm. The enzyme catalyses a 2'-deoxyribonucleoside 5'-diphosphate + ATP = a 2'-deoxyribonucleoside 5'-triphosphate + ADP. It catalyses the reaction a ribonucleoside 5'-diphosphate + ATP = a ribonucleoside 5'-triphosphate + ADP. Major role in the synthesis of nucleoside triphosphates other than ATP. The ATP gamma phosphate is transferred to the NDP beta phosphate via a ping-pong mechanism, using a phosphorylated active-site intermediate. In Haemophilus ducreyi (strain 35000HP / ATCC 700724), this protein is Nucleoside diphosphate kinase.